Reading from the N-terminus, the 294-residue chain is MHPRFQTAFAQLADNLQSALEPILADKYFPALLTGEQVSSLKSATGLDEDALAFALLPLAAACARTPLSNFNVGAIARGVSGTWYFGANMEFIGATMQQTVHAEQSAISHAWLSGEKALEAITVNYTPCGHCRQFMNELNSGLDLRIHLPGREAHALRDYLPDAFGPKDLEIKTLLMDEQDHGYALTGDALSQAAIAAANRSHMPYSKSPSGVALECKDGRIFSGSYAENAAFNPTLPPLQGALILLNLKGYDYPDIQRAVLAEKADAPLIQWDATSATLKALGCHSIDRVLLA.

2 CMP/dCMP-type deaminase domains span residues 48–168 and 186–294; these read DEDA…FGPK and LTGD…VLLA. Substrate is bound at residue 89–91; it reads NME. Residue His-102 participates in Zn(2+) binding. The Proton donor role is filled by Glu-104. Zn(2+)-binding residues include Cys-129 and Cys-132.

It belongs to the cytidine and deoxycytidylate deaminase family. As to quaternary structure, homodimer. Zn(2+) is required as a cofactor.

The catalysed reaction is cytidine + H2O + H(+) = uridine + NH4(+). The enzyme catalyses 2'-deoxycytidine + H2O + H(+) = 2'-deoxyuridine + NH4(+). Functionally, this enzyme scavenges exogenous and endogenous cytidine and 2'-deoxycytidine for UMP synthesis. The protein is Cytidine deaminase of Escherichia coli O7:K1 (strain IAI39 / ExPEC).